Reading from the N-terminus, the 313-residue chain is D-alanine--D-alanine ligase (313 aa).

The ATP-grasp domain maps to 107–303; that stretch reads KQAFAAAGLT…FEALVEQIAC (197 aa). 135–188 is an ATP binding site; it reads PFGLPVVVKPVQEGSSVGVTIVKKPEDLQAALDEAFRYDTLVLVEKYIKGQEVQ. Mg(2+)-binding residues include aspartate 256, glutamate 269, and asparagine 271.

This sequence belongs to the D-alanine--D-alanine ligase family. Mg(2+) serves as cofactor. Mn(2+) is required as a cofactor.

It localises to the cytoplasm. It carries out the reaction 2 D-alanine + ATP = D-alanyl-D-alanine + ADP + phosphate + H(+). It participates in cell wall biogenesis; peptidoglycan biosynthesis. Functionally, cell wall formation. The protein is D-alanine--D-alanine ligase of Trichlorobacter lovleyi (strain ATCC BAA-1151 / DSM 17278 / SZ) (Geobacter lovleyi).